The primary structure comprises 161 residues: Small ribosomal subunit protein uS19 (161 aa).

Residues M1–Q19 are compositionally biased toward basic residues. The tract at residues M1–R26 is disordered.

It belongs to the universal ribosomal protein uS19 family.

Protein S19 forms a complex with S13 that binds strongly to the 16S ribosomal RNA. This chain is Small ribosomal subunit protein uS19, found in Methanococcus maripaludis (strain C6 / ATCC BAA-1332).